The chain runs to 148 residues: Pseudoazurin (148 aa).

The N-terminal stretch at 1 to 25 is a signal peptide; that stretch reads MMIFRALIAAATLAIAIATTLPAAA. The Plastocyanin-like domain occupies 30–118; the sequence is VKMLNSGPGG…MGMVALVVVG (89 aa). 4 residues coordinate Cu cation: His-65, Cys-103, His-106, and Met-111.

Cu cation is required as a cofactor.

It is found in the periplasm. The sequence is that of Pseudoazurin from Methylorubrum extorquens (strain ATCC 14718 / DSM 1338 / JCM 2805 / NCIMB 9133 / AM1) (Methylobacterium extorquens).